Consider the following 229-residue polypeptide: V-type proton ATPase subunit E (229 aa).

This sequence belongs to the V-ATPase E subunit family. V-ATPase is a heteromultimeric enzyme composed of a peripheral catalytic V1 complex (components A to H) attached to an integral membrane V0 proton pore complex (components: a, c, c', c'' and d).

Functionally, subunit of the peripheral V1 complex of vacuolar ATPase essential for assembly or catalytic function. V-ATPase is responsible for acidifying a variety of intracellular compartments in eukaryotic cells. The protein is V-type proton ATPase subunit E (VATE) of Spinacia oleracea (Spinach).